A 451-amino-acid chain; its full sequence is Phosphoglucosamine mutase (451 aa).

S107 functions as the Phosphoserine intermediate in the catalytic mechanism. Mg(2+)-binding residues include S107, D246, D248, and D250. The residue at position 107 (S107) is a Phosphoserine.

It belongs to the phosphohexose mutase family. Requires Mg(2+) as cofactor. In terms of processing, activated by phosphorylation.

It carries out the reaction alpha-D-glucosamine 1-phosphate = D-glucosamine 6-phosphate. Catalyzes the conversion of glucosamine-6-phosphate to glucosamine-1-phosphate. In Burkholderia ambifaria (strain ATCC BAA-244 / DSM 16087 / CCUG 44356 / LMG 19182 / AMMD) (Burkholderia cepacia (strain AMMD)), this protein is Phosphoglucosamine mutase.